The primary structure comprises 336 residues: Tetraacyldisaccharide 4'-kinase (336 aa).

60–67 (TAGGNGKT) serves as a coordination point for ATP.

It belongs to the LpxK family.

It catalyses the reaction a lipid A disaccharide + ATP = a lipid IVA + ADP + H(+). The protein operates within glycolipid biosynthesis; lipid IV(A) biosynthesis; lipid IV(A) from (3R)-3-hydroxytetradecanoyl-[acyl-carrier-protein] and UDP-N-acetyl-alpha-D-glucosamine: step 6/6. Transfers the gamma-phosphate of ATP to the 4'-position of a tetraacyldisaccharide 1-phosphate intermediate (termed DS-1-P) to form tetraacyldisaccharide 1,4'-bis-phosphate (lipid IVA). This chain is Tetraacyldisaccharide 4'-kinase, found in Vibrio cholerae serotype O1 (strain ATCC 39315 / El Tor Inaba N16961).